Here is a 51-residue protein sequence, read N- to C-terminus: Large ribosomal subunit protein eL39-like (51 aa).

Belongs to the eukaryotic ribosomal protein eL39 family. As to quaternary structure, component of a male germ cell-specific 60S large ribosomal subunit (LSU), which contains RPL10L and RPL39L, instead of RPL10 and RPL39 paralogs. The composition of the rest of the complex is similar to classical ribosomes. As to expression, highly expressed in spermatocytes and spermatids. Highly expressed in embryonic stem cells.

The protein localises to the cytoplasm. Male germ cell-specific component of the ribosome, which is required for the formation of sperm and male fertility. Replaces the RPL39 paralog in the ribosome of male germ cells. The ribosome is a large ribonucleoprotein complex responsible for the synthesis of proteins in the cell. The male germ cell-specific ribosome displays a ribosomal polypeptide exit tunnel of distinct size and charge states compared with the classical ribosome. It is responsible for regulating the biosynthesis and folding of a subset of male germ-cell-specific proteins that are essential for the formation of sperm. The polypeptide is Large ribosomal subunit protein eL39-like (Mus musculus (Mouse)).